The primary structure comprises 118 residues: Nucleoid-associated protein TM_0687 (118 aa).

This sequence belongs to the YbaB/EbfC family. In terms of assembly, homodimer.

The protein resides in the cytoplasm. It localises to the nucleoid. Binds to DNA and alters its conformation. May be involved in regulation of gene expression, nucleoid organization and DNA protection. The polypeptide is Nucleoid-associated protein TM_0687 (Thermotoga maritima (strain ATCC 43589 / DSM 3109 / JCM 10099 / NBRC 100826 / MSB8)).